We begin with the raw amino-acid sequence, 893 residues long: Translation initiation factor IF-2 (893 aa).

Disordered stretches follow at residues 51–203 (KEHG…AEAE) and 216–299 (EENE…TSMQ). 3 stretches are compositionally biased toward basic and acidic residues: residues 102–203 (ALEE…AEAE), 216–238 (EENE…DADY), and 245–261 (HARE…EQQP). In terms of domain architecture, tr-type G spans 392-561 (GRAPVVTIMG…LLQSEVLELT (170 aa)). The tract at residues 401–408 (GHVDHGKT) is G1. A GTP-binding site is contributed by 401–408 (GHVDHGKT). Residues 426–430 (GITQH) form a G2 region. Residues 447-450 (DTPG) form a G3 region. Residues 447 to 451 (DTPGH) and 501 to 504 (NKID) each bind GTP. The G4 stretch occupies residues 501–504 (NKID). The interval 537–539 (SAK) is G5.

It belongs to the TRAFAC class translation factor GTPase superfamily. Classic translation factor GTPase family. IF-2 subfamily.

The protein localises to the cytoplasm. Functionally, one of the essential components for the initiation of protein synthesis. Protects formylmethionyl-tRNA from spontaneous hydrolysis and promotes its binding to the 30S ribosomal subunits. Also involved in the hydrolysis of GTP during the formation of the 70S ribosomal complex. The sequence is that of Translation initiation factor IF-2 from Aliivibrio fischeri (strain ATCC 700601 / ES114) (Vibrio fischeri).